We begin with the raw amino-acid sequence, 88 residues long: Small ribosomal subunit protein uS17 (88 aa).

This sequence belongs to the universal ribosomal protein uS17 family. Part of the 30S ribosomal subunit.

Its function is as follows. One of the primary rRNA binding proteins, it binds specifically to the 5'-end of 16S ribosomal RNA. This chain is Small ribosomal subunit protein uS17, found in Prochlorococcus marinus (strain MIT 9301).